The chain runs to 152 residues: D-aminoacyl-tRNA deacylase (152 aa).

The short motif at 142-143 (GP) is the Gly-cisPro motif, important for rejection of L-amino acids element.

The protein belongs to the DTD family. As to quaternary structure, homodimer.

It is found in the cytoplasm. It catalyses the reaction glycyl-tRNA(Ala) + H2O = tRNA(Ala) + glycine + H(+). The catalysed reaction is a D-aminoacyl-tRNA + H2O = a tRNA + a D-alpha-amino acid + H(+). In terms of biological role, an aminoacyl-tRNA editing enzyme that deacylates mischarged D-aminoacyl-tRNAs. Also deacylates mischarged glycyl-tRNA(Ala), protecting cells against glycine mischarging by AlaRS. Acts via tRNA-based rather than protein-based catalysis; rejects L-amino acids rather than detecting D-amino acids in the active site. By recycling D-aminoacyl-tRNA to D-amino acids and free tRNA molecules, this enzyme counteracts the toxicity associated with the formation of D-aminoacyl-tRNA entities in vivo and helps enforce protein L-homochirality. This Paraburkholderia phytofirmans (strain DSM 17436 / LMG 22146 / PsJN) (Burkholderia phytofirmans) protein is D-aminoacyl-tRNA deacylase.